A 451-amino-acid chain; its full sequence is Cobalamin reductase PduS (451 aa).

4Fe-4S ferredoxin-type domains are found at residues 255-284 (TVLS…HELS) and 300-330 (PQLL…MRIN). [4Fe-4S] cluster is bound by residues C264, C267, C270, C274, C309, C312, C315, and C320.

The protein belongs to the PduS cobalamin reductase family. In terms of assembly, monomer, forms a complex with PduO. Interacts with PduT, probably via the N-terminus of PduS. The cofactor is [4Fe-4S] cluster. FMN is required as a cofactor.

The protein localises to the bacterial microcompartment. It participates in polyol metabolism; 1,2-propanediol degradation. A bifunctional cobalamin reductase that converts cob(III)alamin to cob(II)alamin and then to cob(I)alamin in the bacterial microcompartment (BMC) dedicated to 1,2-propanediol (1,2-PD) degradation. PduS and PduO allow regeneration of the adenosylcobalamin cofactor within the BMC. Cobalamin reduction probably occurs spontaneously in the presence of free reduced flavin nucleotides, this protein may be involved in electron transfer for this reduction. Functionally, expression of a cosmid containing the full 21-gene pdu operon in E.coli allows E.coli to grow on 1,2-propanediol (1,2-PD) with the appearance of BMCs in its cytoplasm. In terms of biological role, the 1,2-PD-specific bacterial microcompartment (BMC) concentrates low levels of 1,2-PD catabolic enzymes, concentrates volatile reaction intermediates thus enhancing pathway flux and keeps the level of toxic, mutagenic propionaldehyde low. The sequence is that of Cobalamin reductase PduS from Citrobacter freundii.